We begin with the raw amino-acid sequence, 409 residues long: Elongation factor Tu (409 aa).

One can recognise a tr-type G domain in the interval 10 to 214 (KPHVNVGTIG…AVDNYIPTPE (205 aa)). The G1 stretch occupies residues 19–26 (GHVDHGKT). 19–26 (GHVDHGKT) serves as a coordination point for GTP. Residue Thr-26 coordinates Mg(2+). The interval 60-64 (GITIN) is G2. The G3 stretch occupies residues 81–84 (DCPG). GTP-binding positions include 81–85 (DCPGH) and 136–139 (NKVD). The segment at 136–139 (NKVD) is G4. Residues 174–176 (SGL) are G5.

This sequence belongs to the TRAFAC class translation factor GTPase superfamily. Classic translation factor GTPase family. EF-Tu/EF-1A subfamily. Monomer.

The protein localises to the cytoplasm. It catalyses the reaction GTP + H2O = GDP + phosphate + H(+). Its function is as follows. GTP hydrolase that promotes the GTP-dependent binding of aminoacyl-tRNA to the A-site of ribosomes during protein biosynthesis. The chain is Elongation factor Tu from Thermosynechococcus vestitus (strain NIES-2133 / IAM M-273 / BP-1).